The following is a 147-amino-acid chain: Large ribosomal subunit protein bL9 (147 aa).

It belongs to the bacterial ribosomal protein bL9 family.

In terms of biological role, binds to the 23S rRNA. The protein is Large ribosomal subunit protein bL9 of Bacteroides fragilis (strain ATCC 25285 / DSM 2151 / CCUG 4856 / JCM 11019 / LMG 10263 / NCTC 9343 / Onslow / VPI 2553 / EN-2).